A 722-amino-acid polypeptide reads, in one-letter code: Ribosomal RNA large subunit methyltransferase K/L (722 aa).

A THUMP domain is found at 43-154 (IGLRACLWSR…GNEGRVGIDL (112 aa)).

It belongs to the methyltransferase superfamily. RlmKL family.

The protein resides in the cytoplasm. It catalyses the reaction guanosine(2445) in 23S rRNA + S-adenosyl-L-methionine = N(2)-methylguanosine(2445) in 23S rRNA + S-adenosyl-L-homocysteine + H(+). The catalysed reaction is guanosine(2069) in 23S rRNA + S-adenosyl-L-methionine = N(2)-methylguanosine(2069) in 23S rRNA + S-adenosyl-L-homocysteine + H(+). In terms of biological role, specifically methylates the guanine in position 2445 (m2G2445) and the guanine in position 2069 (m7G2069) of 23S rRNA. This Magnetococcus marinus (strain ATCC BAA-1437 / JCM 17883 / MC-1) protein is Ribosomal RNA large subunit methyltransferase K/L.